The chain runs to 290 residues: S-adenosylmethionine-dependent nucleotide dehydratase (290 aa).

The 221-residue stretch at 6–226 (SGNNIIPSVN…VNRHSKNKFL (221 aa)) folds into the Radical SAM core domain. Cysteine 22, cysteine 26, and cysteine 29 together coordinate [4Fe-4S] cluster.

It belongs to the radical SAM superfamily. Viperin family. It depends on [4Fe-4S] cluster as a cofactor.

It catalyses the reaction UTP + AH2 + S-adenosyl-L-methionine = 3'-deoxy-3',4'-didehydro-UTP + 5'-deoxyadenosine + L-methionine + A + H2O + H(+). Its function is as follows. Expression of pVip47 in E.coli (strain MG1655) confers resistance to phage P1; has no effect against T7. Catalyzes the conversion of uridine triphosphate (UTP) to 3'-deoxy-3',4'-didehydro-UTP (ddhUTP), probably via a SAM-dependent radical mechanism. The modified nucleotide represses transcription from T7 RNA polymerase-directed genes (possibly by acting as chain terminators), strongly suggesting these nucleotides block viral polymerase transcription. How this protein allows bacteria to resist viruses that do not encode their own RNA polymerase (such as lambda, P1) is unknown. This is S-adenosylmethionine-dependent nucleotide dehydratase from Flammeovirga pacifica.